Consider the following 331-residue polypeptide: MTEVDDGCGGRLRGSVLLEDECDLKQECETPTHSLVQGRDPPVVVVWRNVVLMSVLHTAAVYGLVLLPSASAYTLLAFCFVSSALGITAGAHRLWSHRSYKASLPLRIFLAVANSMGFQNDIYEWARDHRVHHKYSETDADPHNASRGFFFAHIGWLLVKKHPKVIENGQKLELSDLKNDRVVMFQRRFYKHSVVVMCFLIPAMLPWFLWAESLWVGYFVPVLLRYALVLNATWLVNSAAHMWGNQPYDVNINPRENRFVTFSAIGEGFHNYHHTFPYDYATSEFGCRLNLTTCFINLMCVLGLAKDCRRVPTELVMARVKRTGDGSHRSG.

Over 1-46 the chain is Cytoplasmic; that stretch reads MTEVDDGCGGRLRGSVLLEDECDLKQECETPTHSLVQGRDPPVVVV. Residues 47-67 traverse the membrane as a helical segment; it reads WRNVVLMSVLHTAAVYGLVLL. Asparagine 49 contributes to the substrate binding site. The Lumenal portion of the chain corresponds to 68–71; sequence PSAS. The helical transmembrane segment at 72 to 90 threads the bilayer; it reads AYTLLAFCFVSSALGITAG. Topologically, residues 91–189 are cytoplasmic; that stretch reads AHRLWSHRSY…DRVVMFQRRF (99 aa). Residues histidine 92 and histidine 97 each coordinate Fe cation. The Histidine box-1 motif lies at 92–97; it reads HRLWSH. Asparagine 120, arginine 127, and aspartate 128 together coordinate substrate. Fe cation contacts are provided by histidine 129, histidine 132, and histidine 133. Residues 129 to 133 carry the Histidine box-2 motif; it reads HRVHH. Lysine 161 lines the substrate pocket. The chain crosses the membrane as a helical span at residues 190–209; sequence YKHSVVVMCFLIPAMLPWFL. At 210–213 the chain is on the lumenal side; it reads WAES. Residues 214–235 form a helical membrane-spanning segment; the sequence is LWVGYFVPVLLRYALVLNATWL. Tryptophan 234 is a binding site for substrate. Over 236–331 the chain is Cytoplasmic; sequence VNSAAHMWGN…RTGDGSHRSG (96 aa). Residues histidine 241, histidine 270, histidine 273, and histidine 274 each coordinate Fe cation. The short motif at 270 to 274 is the Histidine box-3 element; the sequence is HNYHH.

Belongs to the fatty acid desaturase type 1 family. It depends on Fe(2+) as a cofactor. As to expression, expression is highest in liver, followed by brain and intestine, and lowest in spleen. Also expressed in heart, gill and muscle.

It localises to the endoplasmic reticulum membrane. The enzyme catalyses octadecanoyl-CoA + 2 Fe(II)-[cytochrome b5] + O2 + 2 H(+) = (9Z)-octadecenoyl-CoA + 2 Fe(III)-[cytochrome b5] + 2 H2O. Stearoyl-CoA desaturase that utilizes O(2) and electrons from reduced cytochrome b5 to introduce the first double bond into saturated fatty acyl-CoA substrates. Catalyzes the insertion of a cis double bond at the delta-9 position into fatty acyl-CoA substrates including palmitoyl-CoA and stearoyl-CoA. Contributes to the biosynthesis of membrane phospholipids, cholesterol esters and triglycerides. The chain is Acyl-CoA desaturase 1 from Tachysurus fulvidraco (Yellow catfish).